We begin with the raw amino-acid sequence, 155 residues long: Small ribosomal subunit protein uS7 (155 aa).

It belongs to the universal ribosomal protein uS7 family. As to quaternary structure, part of the 30S ribosomal subunit. Contacts proteins S9 and S11.

In terms of biological role, one of the primary rRNA binding proteins, it binds directly to 16S rRNA where it nucleates assembly of the head domain of the 30S subunit. Is located at the subunit interface close to the decoding center, probably blocks exit of the E-site tRNA. This is Small ribosomal subunit protein uS7 from Mycoplasma genitalium (strain ATCC 33530 / DSM 19775 / NCTC 10195 / G37) (Mycoplasmoides genitalium).